We begin with the raw amino-acid sequence, 468 residues long: 3-isopropylmalate dehydratase large subunit (468 aa).

3 residues coordinate [4Fe-4S] cluster: C347, C407, and C410.

It belongs to the aconitase/IPM isomerase family. LeuC type 1 subfamily. As to quaternary structure, heterodimer of LeuC and LeuD. It depends on [4Fe-4S] cluster as a cofactor.

The catalysed reaction is (2R,3S)-3-isopropylmalate = (2S)-2-isopropylmalate. Its pathway is amino-acid biosynthesis; L-leucine biosynthesis; L-leucine from 3-methyl-2-oxobutanoate: step 2/4. Catalyzes the isomerization between 2-isopropylmalate and 3-isopropylmalate, via the formation of 2-isopropylmaleate. This chain is 3-isopropylmalate dehydratase large subunit, found in Synechocystis sp. (strain ATCC 27184 / PCC 6803 / Kazusa).